The following is a 187-amino-acid chain: Prepilin peptidase-dependent protein B (187 aa).

Residues 1-7 constitute a propeptide, leader sequence; it reads MPVKEQG. Phe8 carries the N-methylphenylalanine modification. A helical transmembrane segment spans residues 8 to 28; it reads FSLLEVLIAMAISSVLLLGAA.

The protein resides in the membrane. Functionally, not yet known. The chain is Prepilin peptidase-dependent protein B (ppdB) from Escherichia coli (strain K12).